Consider the following 212-residue polypeptide: Pyridoxine/pyridoxamine 5'-phosphate oxidase (212 aa).

Substrate is bound by residues 8-11 (RREY) and lysine 66. FMN contacts are provided by residues 61–66 (RIVLLK), 76–77 (FT), arginine 82, lysine 83, and glutamine 105. Positions 123, 127, and 131 each coordinate substrate. FMN contacts are provided by residues 140 to 141 (QS) and tryptophan 185. Substrate is bound at residue 191-193 (RLH). Arginine 195 serves as a coordination point for FMN.

This sequence belongs to the pyridoxamine 5'-phosphate oxidase family. In terms of assembly, homodimer. FMN is required as a cofactor.

It catalyses the reaction pyridoxamine 5'-phosphate + O2 + H2O = pyridoxal 5'-phosphate + H2O2 + NH4(+). The catalysed reaction is pyridoxine 5'-phosphate + O2 = pyridoxal 5'-phosphate + H2O2. It participates in cofactor metabolism; pyridoxal 5'-phosphate salvage; pyridoxal 5'-phosphate from pyridoxamine 5'-phosphate: step 1/1. The protein operates within cofactor metabolism; pyridoxal 5'-phosphate salvage; pyridoxal 5'-phosphate from pyridoxine 5'-phosphate: step 1/1. Functionally, catalyzes the oxidation of either pyridoxine 5'-phosphate (PNP) or pyridoxamine 5'-phosphate (PMP) into pyridoxal 5'-phosphate (PLP). The chain is Pyridoxine/pyridoxamine 5'-phosphate oxidase from Shewanella sp. (strain ANA-3).